Here is a 334-residue protein sequence, read N- to C-terminus: Methionine import ATP-binding protein MetN (334 aa).

In terms of domain architecture, ABC transporter spans Val7–Val246. Gly43–Ser50 is a binding site for ATP.

It belongs to the ABC transporter superfamily. Methionine importer (TC 3.A.1.24) family. The complex is composed of two ATP-binding proteins (MetN), two transmembrane proteins (MetI) and a solute-binding protein (MetQ).

It is found in the cell membrane. The enzyme catalyses L-methionine(out) + ATP + H2O = L-methionine(in) + ADP + phosphate + H(+). It carries out the reaction D-methionine(out) + ATP + H2O = D-methionine(in) + ADP + phosphate + H(+). Functionally, part of the ABC transporter complex MetNIQ involved in methionine import. Responsible for energy coupling to the transport system. The protein is Methionine import ATP-binding protein MetN of Nocardia farcinica (strain IFM 10152).